The sequence spans 540 residues: DEAD-box ATP-dependent RNA helicase 57 (540 aa).

Residues aspartate 24–aspartate 73 are disordered. Over residues lysine 47–arginine 64 the composition is skewed to basic residues. The stretch at lysine 101–aspartate 129 forms a coiled coil. The Q motif motif lies at glutamate 146–arginine 174. Residues isoleucine 177–valine 347 enclose the Helicase ATP-binding domain. An ATP-binding site is contributed by alanine 190–threonine 197. The DEAD box signature appears at aspartate 294–aspartate 297. Residues alanine 375 to proline 519 form the Helicase C-terminal domain.

This sequence belongs to the DEAD box helicase family. DDX52/ROK1 subfamily.

It catalyses the reaction ATP + H2O = ADP + phosphate + H(+). The chain is DEAD-box ATP-dependent RNA helicase 57 from Oryza sativa subsp. japonica (Rice).